Reading from the N-terminus, the 546-residue chain is Sulfite oxidase, mitochondrial (546 aa).

The transit peptide at 1-80 (MLLQLYRSVV…YHEHRCRASQ (80 aa)) directs the protein to the mitochondrion. The 80-residue stretch at 83 to 162 (PRMYSKEDVR…LAEYKIGELN (80 aa)) folds into the Cytochrome b5 heme-binding domain. His119 serves as a coordination point for heme b. Phosphoserine is present on Ser124. Residues His144, Gln146, and His148 each contribute to the heme b site. The segment at 166–175 (SMSPSVEASD) is hinge. The interval 176–402 (PYADDPIRHP…YSHWQRRDYK (227 aa)) is moco domain. Mo-molybdopterin-binding positions include 216-220 (FTRNH), Cys265, Asp323, His362, Arg367, and 378-380 (HVK). The tract at residues 403–539 (GFSPSVDWDT…RGVLSNAWHR (137 aa)) is homodimerization.

As to quaternary structure, homodimer. It depends on heme b as a cofactor. Requires Mo-molybdopterin as cofactor.

The protein localises to the mitochondrion intermembrane space. It catalyses the reaction sulfite + O2 + H2O = sulfate + H2O2. It participates in energy metabolism; sulfur metabolism. Catalyzes the oxidation of sulfite to sulfate, the terminal reaction in the oxidative degradation of sulfur-containing amino acids. The sequence is that of Sulfite oxidase, mitochondrial (Suox) from Mus musculus (Mouse).